The sequence spans 301 residues: Homoserine O-acetyltransferase (301 aa).

Catalysis depends on cysteine 142, which acts as the Acyl-thioester intermediate. Substrate-binding residues include lysine 163 and serine 192. Histidine 235 (proton acceptor) is an active-site residue. The active site involves glutamate 237. Residue arginine 249 coordinates substrate.

It belongs to the MetA family.

It is found in the cytoplasm. It carries out the reaction L-homoserine + acetyl-CoA = O-acetyl-L-homoserine + CoA. It participates in amino-acid biosynthesis; L-methionine biosynthesis via de novo pathway; O-acetyl-L-homoserine from L-homoserine: step 1/1. Functionally, transfers an acetyl group from acetyl-CoA to L-homoserine, forming acetyl-L-homoserine. This chain is Homoserine O-acetyltransferase, found in Bacillus cereus (strain ZK / E33L).